We begin with the raw amino-acid sequence, 129 residues long: Vacuolar transporter chaperone complex subunit 1 (129 aa).

Residue Ser-2 is modified to N-acetylserine. At 2-32 (SSAPLLQRTPGKKIALPTRVEPKVFFANERT) the chain is on the cytoplasmic side. The chain crosses the membrane as a helical span at residues 33-53 (FLSWLNFTVMLGGLGVGLLNF). The Vacuolar portion of the chain corresponds to 54 to 59 (GDKIGR). The chain crosses the membrane as a helical span at residues 60–80 (VSAGLFTFVAMGTMIYALVTY). At 81-98 (HWRAAAIRRRGSGPYDDR) the chain is on the cytoplasmic side. The helical transmembrane segment at 99 to 119 (LGPTLLCFFLLVAVIINFILR) threads the bilayer. Topologically, residues 120 to 129 (LKYNDANTKL) are vacuolar.

The protein belongs to the VTC1 family. The VTC core complex is an integral membrane heterooligomer composed of the catalytic subunit VTC4 and the accessory subunits VTC1, VTC2 and VTC3. The complex exists in 2 different sub-complexes: VTC1-VTC2-VCT4 and VCT1-VTC3-VTC4. The VCT1-VTC3-VTC4 subcomplex is mostly found on the vacuolar membrane. The VTC1-VTC2-VCT4 subcomplex is observed in the cell periphery, probably ER and nuclear envelope, but localizes to the vacuole under phosphate starvation. Each subunit contains 3 transmembrane helices. VTC1 is a small membrane protein without hydrophilic domain. VTC2, VTC3 and VTC4 are related and have 2 hydrophilic domains that face the cytosol, an N-terminal SPX domain and the central core domain. The central core in VTC4 is the catalytic domain, with the essential catalytic lysine replaced by isoleucine and leucine in VTC2 and VTC3, respectively. The core complex associates with the accessory subunit VTC5. The complex interacts with the v-SNARE NYV1 and with the V(0) subunit of V-ATPase VPH1.

The protein localises to the vacuole membrane. It is found in the cytoplasm. It localises to the cell cortex. Its subcellular location is the endoplasmic reticulum membrane. The protein resides in the cytoplasmic vesicle. The protein localises to the autophagosome membrane. In terms of biological role, accessory subunit of the vacuolar transporter chaperone (VTC) complex. The VTC complex acts as a vacuolar polyphosphate polymerase that catalyzes the synthesis of inorganic polyphosphate (polyP) via transfer of phosphate from ATP to a growing polyP chain, releasing ADP. VTC exposes its catalytic domain VTC4 to the cytosol, where the growing polyP chain winds through a tunnel-shaped pocket, integrating cytoplasmic polymer synthesis with polyP membrane translocation. The VTC complex carries 9 vacuolar transmembrane domains, which are likely to constitute the translocation channel into the organelle lumen. PolyP synthesis is tightly coupled to its transport into the vacuole lumen, in order to avoid otherwise toxic intermediates in the cytosol, and it depends on the proton gradient across the membrane, formed by V-ATPase. VTC1 contributes only 3 transmembrane domains to the complex. The VTC complex also plays a role in vacuolar membrane fusion. Required for SEC18/NSF activity in SNARE priming, membrane binding of LMA1 and V(0) trans-complex formation. The sequence is that of Vacuolar transporter chaperone complex subunit 1 from Saccharomyces cerevisiae (strain ATCC 204508 / S288c) (Baker's yeast).